Consider the following 709-residue polypeptide: Elongation factor G (709 aa).

The region spanning 10 to 295 (NQVRNIGIMA…AVVDYLPSPE (286 aa)) is the tr-type G domain. Residues 19–26 (AHIDAGKT), 91–95 (DTPGH), and 145–148 (NKMD) contribute to the GTP site.

Belongs to the TRAFAC class translation factor GTPase superfamily. Classic translation factor GTPase family. EF-G/EF-2 subfamily.

The protein resides in the cytoplasm. Catalyzes the GTP-dependent ribosomal translocation step during translation elongation. During this step, the ribosome changes from the pre-translocational (PRE) to the post-translocational (POST) state as the newly formed A-site-bound peptidyl-tRNA and P-site-bound deacylated tRNA move to the P and E sites, respectively. Catalyzes the coordinated movement of the two tRNA molecules, the mRNA and conformational changes in the ribosome. The polypeptide is Elongation factor G (Bifidobacterium animalis subsp. lactis (strain AD011)).